A 1577-amino-acid chain; its full sequence is Hemolysin (1577 aa).

The N-terminal stretch at 1 to 29 (MKSKNFKLSPSGRLAASLAIIFVSLNAYG) is a signal peptide. Positions 437–446 (EKESRSENGN) are enriched in basic and acidic residues. Disordered regions lie at residues 437-467 (EKESRSENGNKRNHTSRLESGSWSNSHQTET), 1081-1103 (TDTHSESQSNVNGSANLKVGTTP), 1169-1188 (QSASSEHTEKGNNLSGGVQA), and 1213-1232 (KQDEKSVSREGGTINNSGNL). Composition is skewed to polar residues over residues 454–467 (LESGSWSNSHQTET), 1081–1095 (TDTHSESQSNVNGSA), and 1169–1184 (QSASSEHTEKGNNLSG).

It is found in the cell outer membrane. Its function is as follows. Bacterial hemolysins are exotoxins that attack blood cell membranes and cause cell rupture by mechanisms not clearly defined. In terms of biological role, cell-bound hemolysin, which releases heme-iron from erythrocytes by interaction with the erythrocyte membrane. HpmA requires HpmB function. This is Hemolysin (hpmA) from Proteus mirabilis.